The chain runs to 45 residues: Large ribosomal subunit protein bL34 (45 aa).

A compositionally biased stretch (polar residues) spans 1 to 10; the sequence is MTQRTLGGTN. Positions 1–45 are disordered; the sequence is MTQRTLGGTNRKQKRTSGFRARMRTHNGRKVIQARRSKGRHRLAV. Basic residues predominate over residues 11–45; the sequence is RKQKRTSGFRARMRTHNGRKVIQARRSKGRHRLAV.

Belongs to the bacterial ribosomal protein bL34 family.

The polypeptide is Large ribosomal subunit protein bL34 (rpmH) (Synechocystis sp. (strain ATCC 27184 / PCC 6803 / Kazusa)).